Here is a 258-residue protein sequence, read N- to C-terminus: Retron Ec83 putative HNH endonuclease (258 aa).

Functionally, putative HNH endonuclease component of antiviral defense system retron Ec83, composed of a non-coding RNA (ncRNA), a reverse transcriptase (RT), a probable ATPase and this protein. Expression of retron Ec78 confers protection against bacteriophage T2, T4 and T6. At multiplicity of infection (MOI) of 0.02 cultures slow growth when infected with T4 but do not collapse, at MOI 2 cultures enter growth stasis. The sequence is that of Retron Ec83 putative HNH endonuclease from Escherichia coli.